We begin with the raw amino-acid sequence, 1110 residues long: Coiled-coil domain-containing protein 150 (1110 aa).

4 coiled-coil regions span residues 122-250 (LENL…TSAS), 288-313 (QDLL…SDLN), 413-695 (AAHA…KEDN), and 728-1048 (SEIA…EAHR).

The chain is Coiled-coil domain-containing protein 150 (Ccdc150) from Mus musculus (Mouse).